The following is a 706-amino-acid chain: MSSDASQGVITTPPPPSMPHKERYFDRINENDPEYIRERNMSPDLRQDFNMMEQRKRVTQILQSPAFREDLECLIQEQMKKGHNPTGLLALQQIADYIMANSFSGFSSPPLSLGMVTPINDLPGADTSSYVKGEKLTRCKLASLYRLVDLFGWAHLANTYISVRISKEQDHIIIIPRGLSFSEATASNLVKVNIIGEVVDQGSTNLKIDHTGFSPHAAIYSTRPDVKCVIHIHTLATAAVSSMKCGILPISQESLLLGDVAYYDYQGSLEEQEERIQLQKVLGPSCKVLVLRNHGVVALGETLEEAFHYIFNVQLACEIQVQALAGAGGVDNLHVLDFQKYKAFTYTVAASGGGGVNMGSHQKWKVGEIEFEGLMRTLDNLGYRTGYAYRHPLIREKPRHKSDVEIPATVTAFSFEDDTVPLSPLKYMAQRQQREKTRWLNSPNTYMKVNVPEESRNGETSPRTKITWMKAEDSSKVSGGTPIKIEDPNQFVPLNTNPNEVLEKRNKIREQNRYDLKTAGPQSQLLAGIVVDKPPSTMQFEDDDHGPPAPPNPFSHLTEGELEEYKRTIERKQQGLEDAEQELLSDDASSVSQIQSQTQSPQNVPEKLEENHELFSKSFISMEVPVMVVNGKDDMHDVEDELAKRVSRLSTSTTIENIEITIKSPEKIEEVLSPEGSPSKSPSKKKKKFRTPSFLKKNKKKEKVEA.

The span at 1–10 (MSSDASQGVI) shows a compositional bias: polar residues. The segment at 1–20 (MSSDASQGVITTPPPPSMPH) is disordered. An N-acetylserine modification is found at serine 2. Residues serine 42, serine 64, serine 402, serine 414, serine 423, serine 442, and serine 461 each carry the phosphoserine modification. 4 disordered regions span residues 471 to 497 (AEDSSKVSGGTPIKIEDPNQFVPLNTN), 535 to 555 (PSTMQFEDDDHGPPAPPNPFS), 575 to 610 (GLEDAEQELLSDDASSVSQIQSQTQSPQNVPEKLEE), and 666 to 706 (EKIE…KVEA). Lysine 484 participates in a covalent cross-link: Glycyl lysine isopeptide (Lys-Gly) (interchain with G-Cter in SUMO2). Residues serine 585, serine 590, serine 673, serine 677, serine 679, serine 681, and serine 683 each carry the phosphoserine modification. Residues 589–602 (SSVSQIQSQTQSPQ) are compositionally biased toward low complexity. Basic residues predominate over residues 682–706 (PSKKKKKFRTPSFLKKNKKKEKVEA). Residues 684 to 701 (KKKKKFRTPSFLKKNKKK) are interaction with calmodulin.

This sequence belongs to the aldolase class II family. Adducin subfamily. In terms of assembly, heterodimer of an alpha and a gamma subunit. In terms of processing, sumoylated. Post-translationally, proteolytically cleaved by asparagine endopeptidase (AEP) into 2 fragments. Overexpression of the 1-357 fragment induces neuronal apoptosis, and overexpression of either 1-357 or 358-706 fragment increases the degeneration of dendritic spines. Overexpression of the 1-357 fragment impairs neurite outgrowth by downregulating the expression of Rac2, and induces synaptic dysfunction and cognitive impairments in tau P301S transgenic mice, a mouse model for Alzheimer disease (AD). Ubiquitously expressed. As to expression, cleavage fragment 1-357 is abundantly expressed in the brain of patients with Alzheimer disease (AD), but hardly detectable in age-matched control individuals (at protein level).

The protein localises to the cytoplasm. Its subcellular location is the cytoskeleton. It is found in the cell membrane. Membrane-cytoskeleton-associated protein that promotes the assembly of the spectrin-actin network. Plays a role in actin filament capping. Binds to calmodulin. Involved in myogenic reactivity of the renal afferent arteriole (Af-art), renal interlobular arteries and middle cerebral artery (MCA) to increased perfusion pressure. Involved in regulation of potassium channels in the vascular smooth muscle cells (VSMCs) of the Af-art and MCA ex vivo. Involved in regulation of glomerular capillary pressure, glomerular filtration rate (GFR) and glomerular nephrin expression in response to hypertension. Involved in renal blood flow (RBF) autoregulation. Plays a role in podocyte structure and function. Regulates globular monomer actin (G-actin) and filamentous polymer actin (F-actin) ratios in the primary podocytes affecting actin cytoskeleton organization. Regulates expression of synaptopodin, RhoA, Rac1 and CDC42 in the renal cortex and the primary podocytes. Regulates expression of nephrin in the glomeruli and in the primary podocytes, expression of nephrin and podocinin in the renal cortex, and expression of focal adhesion proteins integrin alpha-3 and integrin beta-1 in the glomeruli. Involved in cell migration and cell adhesion of podocytes, and in podocyte foot process effacement. Regulates expression of profibrotics markers MMP2, MMP9, TGF beta-1, tubular tight junction protein E-cadherin, and mesenchymal markers vimentin and alpha-SMA. Promotes the growth of neurites. The sequence is that of Gamma-adducin (ADD3) from Homo sapiens (Human).